The primary structure comprises 572 residues: AAA ATPase forming ring-shaped complexes (572 aa).

Positions 1–18 (MTTASQQTSSHSTASSTS) are enriched in low complexity. Residues 1–30 (MTTASQQTSSHSTASSTSRKGNNNDATPSL) are disordered. A coiled-coil region spans residues 42–70 (TRNAKLVEMLKASRDKLDALNEQIRALSD). 258 to 263 (GCGKTL) serves as a coordination point for ATP. Positions 543–572 (VAHHNRKTTTETEATEPEGTDSGKGHTDAS) are disordered. Over residues 563 to 572 (DSGKGHTDAS) the composition is skewed to basic and acidic residues.

Belongs to the AAA ATPase family. As to quaternary structure, homohexamer. Assembles into a hexameric ring structure.

In Corynebacterium kroppenstedtii (strain DSM 44385 / JCM 11950 / CIP 105744 / CCUG 35717), this protein is AAA ATPase forming ring-shaped complexes.